Reading from the N-terminus, the 147-residue chain is Allograft inflammatory factor 1 (147 aa).

Ser-2 bears the N-acetylserine mark. The residue at position 11 (Lys-11) is an N6-acetyllysine. Ser-39 carries the post-translational modification Phosphoserine. Residues 45–80 enclose the EF-hand 1 domain; it reads SKLEAFKKKYMEFDLNEDGGIDIMSLKRMMEKLGVP. Asp-58, Asn-60, and Asp-62 together coordinate Ca(2+). Residues 81-115 form the EF-hand 2; degenerate domain; that stretch reads KTHLELKKLIMEVSSGPGETFSYSDFLKMMLGKRS. Residues 128-147 are disordered; it reads AREQEKPTGLPAKKAISELP.

Post-translationally, phosphorylated on serine residues.

It is found in the cytoplasm. Its subcellular location is the cytoskeleton. The protein localises to the cell projection. The protein resides in the ruffle membrane. It localises to the phagocytic cup. Its function is as follows. May play a role in macrophage activation and function. The polypeptide is Allograft inflammatory factor 1 (AIF1) (Bos taurus (Bovine)).